The sequence spans 105 residues: Tyrosine-protein phosphatase 12 (105 aa).

The region spanning 1-105 (WRMIWEKRVE…NLRRIVRTEF (105 aa)) is the Tyrosine-protein phosphatase domain. Asp84 is a binding site for substrate.

Belongs to the protein-tyrosine phosphatase family.

The enzyme catalyses O-phospho-L-tyrosyl-[protein] + H2O = L-tyrosyl-[protein] + phosphate. This Styela plicata (Wrinkled sea squirt) protein is Tyrosine-protein phosphatase 12 (STY-12).